We begin with the raw amino-acid sequence, 114 residues long: Small ribosomal subunit protein uS15 (114 aa).

It belongs to the universal ribosomal protein uS15 family.

The chain is Small ribosomal subunit protein uS15 (RpS13) from Musca domestica (House fly).